The sequence spans 577 residues: Proton channel OTOP3 (577 aa).

A disordered region spans residues 1–46 (MASQTSAPAEPAPMPSPEAKTTEGASSYDQADMETKHAGSPCPPKQ). Topologically, residues 1-69 (MASQTSAPAE…RDRQAQKAGQ (69 aa)) are cytoplasmic. Residues 70–90 (LFSGLLALNVVFLGGAFICSM) form a helical membrane-spanning segment. The Extracellular portion of the chain corresponds to 91 to 100 (IFNKVSVTLG). Residues 101 to 124 (DVWILLAALKVLSLLWLLYYTVGT) form a helical membrane-spanning segment. Residues 125-140 (TRKPHAVLYRDPHAGP) are Cytoplasmic-facing. Residues 141-162 (IWVRGSLVLFGSCTVCLNIFRM) form a helical membrane-spanning segment. Residues 163–174 (GYDVSHIHCKSE) lie on the Extracellular side of the membrane. A helical membrane pass occupies residues 175–198 (VELIFPAIEIVFMIIQTWVLWRHC). Over 199 to 206 (KDCVQVQT) the chain is Cytoplasmic. Residues 207-229 (NFTRCGLMLTLATNLLMWVLAVT) traverse the membrane as a helical segment. Residues 230–276 (NDSMHREIEAELDALMEKFSGNGTNTCMCLNTTVCEVFRKGYLMLYP) are Extracellular-facing. Residues 277 to 293 (FSTEYCLICCAVLFVMW) form a helical membrane-spanning segment. Over 294–319 (KNVSRSLAAHTGAHPNRSPFRLHGTI) the chain is Cytoplasmic. A helical membrane pass occupies residues 320–339 (FGPLLGLLALVAGVCVFVLF). At 340–353 (QIEASGPDIARQYF) the chain is on the extracellular side. A helical transmembrane segment spans residues 354–376 (TLYYAFYVAVLPTMSLACLAGTA). At 377-394 (IHGLEERELDTLKNPTRS) the chain is on the cytoplasmic side. A helical membrane pass occupies residues 395-416 (LDVVLLMGAALGQMGIAYFSIV). Residues 417–427 (AIVATQPHELL) lie on the Extracellular side of the membrane. The helical transmembrane segment at 428-450 (NQLILAYSLLLILQHITQNLFII) threads the bilayer. Residues 451–510 (EGLHRRPLWEPAVSGVMEKQDVELPRRGSLRELGQDLRRASRAYIHSFSHLNWKRRMLKE) lie on the Cytoplasmic side of the membrane. A helical membrane pass occupies residues 511–528 (ISLFLILCNITLWMMPAF). The Extracellular portion of the chain corresponds to 529–547 (GIHPEFENGLEKDFYGYRT). A helical transmembrane segment spans residues 548-570 (WFTIVNFGLPLGVFYRMHSVGGL). Over 571–577 (VEVYLGA) the chain is Cytoplasmic.

The protein belongs to the otopetrin family. Homodimer. Expressed in epidermis, small intestine, stomach and retina.

It is found in the cell membrane. It catalyses the reaction H(+)(in) = H(+)(out). With respect to regulation, activated by extracellular acidification. Activated by Zn(2+) under non-acidic conditions. In terms of biological role, proton-selective channel gated by extracellular protons. The sequence is that of Proton channel OTOP3 from Mus musculus (Mouse).